Consider the following 329-residue polypeptide: Legumin type B (329 aa).

2 disordered regions span residues 47–79 (PETQEEQQERHQQKHSLPVGRRGGQHQQEEDGN) and 97–149 (EEDT…GRNG). Basic and acidic residues predominate over residues 99–112 (DTAKRLRSPRDKRN). The span at 129–138 (QQEEEEEEEE) shows a compositional bias: acidic residues. Positions 161-308 (ENIAQPARAD…AFGLRQRQVT (148 aa)) constitute a Cupin type-1 domain.

Belongs to the 11S seed storage protein (globulins) family. In terms of assembly, hexamer; each subunit is composed of an acidic and a basic chain derived from a single precursor and linked by a disulfide bond.

This protein found in the seeds of many leguminous and non-leguminous plants is the source of sulfur-containing amino acids in seed meals. This Vicia faba (Broad bean) protein is Legumin type B (LEB6).